A 123-amino-acid chain; its full sequence is UPF0212 protein rrnAC0441 (123 aa).

Belongs to the UPF0212 family.

This is UPF0212 protein rrnAC0441 from Haloarcula marismortui (strain ATCC 43049 / DSM 3752 / JCM 8966 / VKM B-1809) (Halobacterium marismortui).